Reading from the N-terminus, the 233-residue chain is Phosphatidylserine decarboxylase proenzyme (233 aa).

Ser-190 acts as the Schiff-base intermediate with substrate; via pyruvic acid in catalysis. The residue at position 190 (Ser-190) is a Pyruvic acid (Ser); by autocatalysis.

The protein belongs to the phosphatidylserine decarboxylase family. PSD-A subfamily. Heterodimer of a large membrane-associated beta subunit and a small pyruvoyl-containing alpha subunit. Pyruvate is required as a cofactor. In terms of processing, is synthesized initially as an inactive proenzyme. Formation of the active enzyme involves a self-maturation process in which the active site pyruvoyl group is generated from an internal serine residue via an autocatalytic post-translational modification. Two non-identical subunits are generated from the proenzyme in this reaction, and the pyruvate is formed at the N-terminus of the alpha chain, which is derived from the carboxyl end of the proenzyme. The post-translation cleavage follows an unusual pathway, termed non-hydrolytic serinolysis, in which the side chain hydroxyl group of the serine supplies its oxygen atom to form the C-terminus of the beta chain, while the remainder of the serine residue undergoes an oxidative deamination to produce ammonia and the pyruvoyl prosthetic group on the alpha chain.

The protein resides in the cell membrane. It carries out the reaction a 1,2-diacyl-sn-glycero-3-phospho-L-serine + H(+) = a 1,2-diacyl-sn-glycero-3-phosphoethanolamine + CO2. It participates in phospholipid metabolism; phosphatidylethanolamine biosynthesis; phosphatidylethanolamine from CDP-diacylglycerol: step 2/2. In terms of biological role, catalyzes the formation of phosphatidylethanolamine (PtdEtn) from phosphatidylserine (PtdSer). The chain is Phosphatidylserine decarboxylase proenzyme from Xanthobacter autotrophicus (strain ATCC BAA-1158 / Py2).